We begin with the raw amino-acid sequence, 33 residues long: Dermaseptin DS VIII-like peptide (33 aa).

The residue at position 33 (alanine 33) is an Alanine amide.

As to expression, expressed by the parotoid glands.

The protein resides in the secreted. Functionally, possesses a potent antimicrobial activity against bacteria, fungi and protozoa. Probably acts by disturbing membrane functions with its amphipathic structure. In Phyllomedusa burmeisteri (Brazilian common walking leaf frog), this protein is Dermaseptin DS VIII-like peptide.